The chain runs to 433 residues: MLDIQLLRKDLDGVAKRLADRGYPLDVAAFSALEAERRAIQTRTEELQARRNSLSKQIGAMKGRGEDTSAVMAEVGGIGDEMKASAVKLDEIQARLSELMLEMPNVPHESVPVGRDETENVEVRRWGAPRQFDFDVKDHVDVGTPLGLDFETGAKLSGARFTVLRGPIARLHRALAQFMLDTHTQQHGYSETYTPYIVNPDVLYGTGQLPKFAEDMFRVEKGGAENTVTQYLISTSEISLTNTVRDSIVEASALPIKLTAHSPCFRSEAGSYGRDTRGMIRQHQFDKVEMVQIVAPEASYAALDEMVGHAEAILQKLELPYRVVALCTGDMGFSAAKTFDLEVWLPAQNTYREISSCSNTESFQARRMQARFRNAQGKPELVHTLNGSGLAVGRTLVAVLENYQNADGSVTVPVALRPYMGGVERIDAPSSAA.

235–237 (TSE) lines the L-serine pocket. 266–268 (RSE) is a binding site for ATP. Residue E289 participates in L-serine binding. 353–356 (EISS) is an ATP binding site. Position 388 (S388) interacts with L-serine.

This sequence belongs to the class-II aminoacyl-tRNA synthetase family. Type-1 seryl-tRNA synthetase subfamily. Homodimer. The tRNA molecule binds across the dimer.

It localises to the cytoplasm. The catalysed reaction is tRNA(Ser) + L-serine + ATP = L-seryl-tRNA(Ser) + AMP + diphosphate + H(+). It catalyses the reaction tRNA(Sec) + L-serine + ATP = L-seryl-tRNA(Sec) + AMP + diphosphate + H(+). The protein operates within aminoacyl-tRNA biosynthesis; selenocysteinyl-tRNA(Sec) biosynthesis; L-seryl-tRNA(Sec) from L-serine and tRNA(Sec): step 1/1. Catalyzes the attachment of serine to tRNA(Ser). Is also able to aminoacylate tRNA(Sec) with serine, to form the misacylated tRNA L-seryl-tRNA(Sec), which will be further converted into selenocysteinyl-tRNA(Sec). This Burkholderia pseudomallei (strain 1106a) protein is Serine--tRNA ligase.